We begin with the raw amino-acid sequence, 200 residues long: Lipopolysaccharide core heptose(II)-phosphate phosphatase (200 aa).

The N-terminal stretch at 1 to 25 (MLAFCRSSLKSKKYFIILLALAAIA) is a signal peptide.

It belongs to the phosphoglycerate mutase family. Ais subfamily.

Its subcellular location is the periplasm. It participates in bacterial outer membrane biogenesis; lipopolysaccharide metabolism. Catalyzes the dephosphorylation of heptose(II) of the outer membrane lipopolysaccharide core. This Escherichia coli O17:K52:H18 (strain UMN026 / ExPEC) protein is Lipopolysaccharide core heptose(II)-phosphate phosphatase.